The following is a 427-amino-acid chain: Histidine--tRNA ligase (427 aa).

Belongs to the class-II aminoacyl-tRNA synthetase family. Homodimer.

The protein resides in the cytoplasm. The enzyme catalyses tRNA(His) + L-histidine + ATP = L-histidyl-tRNA(His) + AMP + diphosphate + H(+). The sequence is that of Histidine--tRNA ligase from Alteromonas mediterranea (strain DSM 17117 / CIP 110805 / LMG 28347 / Deep ecotype).